Here is a 261-residue protein sequence, read N- to C-terminus: Undecaprenyl-diphosphatase (261 aa).

A run of 8 helical transmembrane segments spans residues A9–T31, F46–Y66, I80–G100, I102–F122, A137–P157, A180–W200, G209–V229, and G240–L260.

Belongs to the UppP family.

The protein resides in the cell inner membrane. It carries out the reaction di-trans,octa-cis-undecaprenyl diphosphate + H2O = di-trans,octa-cis-undecaprenyl phosphate + phosphate + H(+). Functionally, catalyzes the dephosphorylation of undecaprenyl diphosphate (UPP). Confers resistance to bacitracin. In Thermus thermophilus (strain ATCC 27634 / DSM 579 / HB8), this protein is Undecaprenyl-diphosphatase.